Here is a 438-residue protein sequence, read N- to C-terminus: Ubiquitin carboxyl-terminal hydrolase 27 (438 aa).

The 344-residue stretch at 78–421 (RGLINLGNTC…EGYLLFYHKQ (344 aa)) folds into the USP domain. Catalysis depends on Cys87, which acts as the Nucleophile. His380 functions as the Proton acceptor in the catalytic mechanism.

This sequence belongs to the peptidase C19 family. Interacts with phosphorylated BCL2L11 isoform BIMEL; this interaction leads to BCL2L11 deubiquitination and stabilization.

Its subcellular location is the cytoplasm. It is found in the cytosol. It localises to the nucleus. It catalyses the reaction Thiol-dependent hydrolysis of ester, thioester, amide, peptide and isopeptide bonds formed by the C-terminal Gly of ubiquitin (a 76-residue protein attached to proteins as an intracellular targeting signal).. Its function is as follows. Deubiquitinase involved in innate antiviral immunity by mediating deubiquitination of CGAS and RIGI. Negatively regulates RIGI by mediating 'Lys-63'-linked deubiquitination of RIGI, inhibiting type I interferon signaling. Also regulates 'Lys-63'-linked ubiquitination level of MDA5/IFIH1. Acts as a positive regulator of the cGAS-STING pathway by catalyzing 'Lys-48'-linked deubiquitination of CGAS, thereby promoting its stabilization. Can reduce the levels of BCL2L11/BIM ubiquitination and stabilize BCL2L11 in response to the RAF-MAPK-degradation signal. By acting on BCL2L11 levels, may counteract the anti-apoptotic effects of MAPK activity. The sequence is that of Ubiquitin carboxyl-terminal hydrolase 27 from Mus musculus (Mouse).